The sequence spans 398 residues: Homeobox protein knotted-1-like 1 (398 aa).

Disordered stretches follow at residues 20–61 (SPIS…HHHQ), 78–102 (NCFRSDHDQPNNNNNPSVKSEASSS), and 241–273 (LNNPDGKSDNMGSSDEEQENNSGGETELPEIDP). Over residues 23-56 (SSSNKNDNTSDTNNNNNNNNSSNYGPGYNNTNNN) the composition is skewed to low complexity. Positions 87–102 (PNNNNNPSVKSEASSS) are enriched in polar residues. Residues 279–299 (ELKNHLLKKYSGYLSSLKQEL) form the ELK domain. The homeobox; TALE-type DNA-binding region spans 300 to 363 (SKKKKKGKLP…NQRKRHWKPS (64 aa)).

It belongs to the TALE/KNOX homeobox family. In terms of assembly, may form heterodimeric complex with the TALE/BELL proteins BEL1, BLH2, BLH8/PNF and BLH9/PNY. Interacts with OFP1, OFP2, OFP4, OFP6 and OFP12. Interacts with CCT7 and CCT8. Interacts with KNATM-B. Binds to AGO10/PNH. Interacts with BZIP30. In terms of tissue distribution, expressed in the vegetative meristem. Present in the base of flower primordia.

It is found in the nucleus. Its function is as follows. May play a role in meristem function, and may be involved in maintaining cells in an undifferentiated, meristematic state, and its expression disappears at the same time the shoot apex undergoes the transition from vegetative to reproductive development. Positive regulator of LATERAL ORGAN BOUNDARIES (LOB). Probably binds to the DNA sequence 5'-TGAC-3'. Able to traffic from the L1 to the L2/L3 layers of the meristem, presumably through plasmodesmata. In Arabidopsis thaliana (Mouse-ear cress), this protein is Homeobox protein knotted-1-like 1 (KNAT1).